A 56-amino-acid chain; its full sequence is Small ribosomal subunit protein uS14 (56 aa).

Zn(2+) is bound by residues cysteine 21, cysteine 24, cysteine 39, and cysteine 42.

The protein belongs to the universal ribosomal protein uS14 family. As to quaternary structure, component of the small ribosomal subunit (SSU). Mature N.crassa ribosomes consist of a small (40S) and a large (60S) subunit. The 40S small subunit contains 1 molecule of ribosomal RNA (18S rRNA) and at least 32 different proteins. The large 60S subunit contains 3 rRNA molecules (26S, 5.8S and 5S rRNA) and at least 42 different proteins. Zn(2+) is required as a cofactor.

The protein localises to the cytoplasm. Functionally, component of the ribosome, a large ribonucleoprotein complex responsible for the synthesis of proteins in the cell. The small ribosomal subunit (SSU) binds messenger RNAs (mRNAs) and translates the encoded message by selecting cognate aminoacyl-transfer RNA (tRNA) molecules. The large subunit (LSU) contains the ribosomal catalytic site termed the peptidyl transferase center (PTC), which catalyzes the formation of peptide bonds, thereby polymerizing the amino acids delivered by tRNAs into a polypeptide chain. The nascent polypeptides leave the ribosome through a tunnel in the LSU and interact with protein factors that function in enzymatic processing, targeting, and the membrane insertion of nascent chains at the exit of the ribosomal tunnel. The sequence is that of Small ribosomal subunit protein uS14 (rps-29) from Neurospora crassa (strain ATCC 24698 / 74-OR23-1A / CBS 708.71 / DSM 1257 / FGSC 987).